Here is a 270-residue protein sequence, read N- to C-terminus: uncharacterized protein (270 aa).

Positions 1–22 (MEYIKKIALYMSVLLLIIFIGG) are cleaved as a signal peptide. Residue C23 is the site of N-palmitoyl cysteine attachment. The S-diacylglycerol cysteine moiety is linked to residue C23.

Belongs to the staphylococcal tandem lipoprotein family.

The protein localises to the cell membrane. This is an uncharacterized protein from Staphylococcus aureus (strain N315).